Here is a 161-residue protein sequence, read N- to C-terminus: Protein-export protein SecB (161 aa).

Belongs to the SecB family. Homotetramer, a dimer of dimers. One homotetramer interacts with 1 SecA dimer.

It localises to the cytoplasm. One of the proteins required for the normal export of preproteins out of the cell cytoplasm. It is a molecular chaperone that binds to a subset of precursor proteins, maintaining them in a translocation-competent state. It also specifically binds to its receptor SecA. The chain is Protein-export protein SecB from Ectopseudomonas mendocina (strain ymp) (Pseudomonas mendocina).